The following is a 462-amino-acid chain: ATP synthase subunit beta 1 (462 aa).

ATP is bound at residue 151 to 158 (GGAGVGKT).

This sequence belongs to the ATPase alpha/beta chains family. As to quaternary structure, F-type ATPases have 2 components, CF(1) - the catalytic core - and CF(0) - the membrane proton channel. CF(1) has five subunits: alpha(3), beta(3), gamma(1), delta(1), epsilon(1). CF(0) has four main subunits: a(1), b(1), b'(1) and c(9-12).

It localises to the cell inner membrane. It carries out the reaction ATP + H2O + 4 H(+)(in) = ADP + phosphate + 5 H(+)(out). Produces ATP from ADP in the presence of a proton gradient across the membrane. The catalytic sites are hosted primarily by the beta subunits. The sequence is that of ATP synthase subunit beta 1 from Chlorobium luteolum (strain DSM 273 / BCRC 81028 / 2530) (Pelodictyon luteolum).